Consider the following 873-residue polypeptide: Tyrosine-protein kinase receptor TYRO3 (873 aa).

An N-terminal signal peptide occupies residues 1-28; that stretch reads MELRRSMALPRLLLLGLWAAALRDGAVA. Ig-like C2-type domains lie at 29-116 and 127-208; these read AGMK…KEES and PYFT…ATVQ. Residues 29–416 are Extracellular-facing; that stretch reads AGMKFTGSPI…QRQPPYGTSW (388 aa). An N-linked (GlcNAc...) asparagine glycan is attached at N51. Intrachain disulfides connect C52/C105 and C148/C191. N-linked (GlcNAc...) asparagine glycans are attached at residues N179, N184, N218, N228, N281, N353, and N367. 2 Fibronectin type-III domains span residues 215-308 and 310-403; these read PPLN…TLEL and PSST…AQEV. Residues 417–437 form a helical membrane-spanning segment; it reads VPVALGILTALVTAVALALIL. Residues 438–873 lie on the Cytoplasmic side of the membrane; sequence LRKRRKETRF…ELETEGEKSC (436 aa). Residues 505 to 776 form the Protein kinase domain; sequence FTLGRMLGKG…GVLRSQLEMI (272 aa). Residues 511–519 and K537 each bind ATP; that span reads LGKGEFGSV. The Proton acceptor role is filled by D642. The residue at position 673 (Y673) is a Phosphotyrosine; by autocatalysis. A disordered region spans residues 845–873; it reads VEGERHPEGQEGENKSLLYELETEGEKSC. Residues 847–858 show a composition bias toward basic and acidic residues; sequence GERHPEGQEGEN.

This sequence belongs to the protein kinase superfamily. Tyr protein kinase family. AXL/UFO subfamily. Post-translationally, autophosphorylated on tyrosine residues. Detected in embryonic retina (at protein level). detected in brain, retina, kidney and in retinal Mueller glia-like cells.

The protein resides in the cell membrane. It carries out the reaction L-tyrosyl-[protein] + ATP = O-phospho-L-tyrosyl-[protein] + ADP + H(+). Receptor tyrosine kinase that transduces signals from the extracellular matrix into the cytoplasm by binding to several ligands. Regulates many physiological processes including cell survival, migration and differentiation. Ligand binding at the cell surface induces dimerization and autophosphorylation of TYRO3 on its intracellular domain that provides docking sites for downstream signaling molecules. Following activation by ligand, enhances PI3-kinase activity and activates the AKT survival pathway, including nuclear translocation of NF-kappa-B and up-regulation of transcription of NF-kappa-B-regulated genes. This chain is Tyrosine-protein kinase receptor TYRO3 (TYRO3), found in Gallus gallus (Chicken).